We begin with the raw amino-acid sequence, 119 residues long: Large ribosomal subunit protein bL20 (119 aa).

It belongs to the bacterial ribosomal protein bL20 family.

Functionally, binds directly to 23S ribosomal RNA and is necessary for the in vitro assembly process of the 50S ribosomal subunit. It is not involved in the protein synthesizing functions of that subunit. This chain is Large ribosomal subunit protein bL20, found in Bordetella petrii (strain ATCC BAA-461 / DSM 12804 / CCUG 43448).